We begin with the raw amino-acid sequence, 405 residues long: Phosphoglycerate kinase (405 aa).

Residues 24–26 (DFN), Arg-40, 63–66 (HLGR), Arg-122, and Arg-162 contribute to the substrate site. ATP is bound by residues Lys-212, Glu-331, and 361–364 (GGDS).

It belongs to the phosphoglycerate kinase family. As to quaternary structure, monomer.

The protein resides in the cytoplasm. It catalyses the reaction (2R)-3-phosphoglycerate + ATP = (2R)-3-phospho-glyceroyl phosphate + ADP. It functions in the pathway carbohydrate degradation; glycolysis; pyruvate from D-glyceraldehyde 3-phosphate: step 2/5. In Corynebacterium glutamicum (strain ATCC 13032 / DSM 20300 / JCM 1318 / BCRC 11384 / CCUG 27702 / LMG 3730 / NBRC 12168 / NCIMB 10025 / NRRL B-2784 / 534), this protein is Phosphoglycerate kinase (pgk).